The primary structure comprises 386 residues: 5-hydroxytryptamine receptor 1B (386 aa).

The tract at residues 1-25 is disordered; the sequence is MEEPGARCAPPPPAGSQTQTPSSNL. Topologically, residues 1–42 are extracellular; sequence MEEPGARCAPPPPAGSQTQTPSSNLSHNCSADSYIYQDSIAL. Positions 16-25 are enriched in polar residues; the sequence is SQTQTPSSNL. N-linked (GlcNAc...) asparagine glycosylation is found at asparagine 24 and asparagine 28. Residues 43 to 68 traverse the membrane as a helical segment; sequence PWKVLLVALLALITLATTLSNAFVIA. Residues 69–82 are Cytoplasmic-facing; the sequence is TVYRTRKLHTPANY. A helical transmembrane segment spans residues 83–107; that stretch reads LIASLAVTDLLVSILVMPISTMYTV. Residues 108–115 are Extracellular-facing; the sequence is TGRWTLGQ. Residues 116-141 form a helical membrane-spanning segment; sequence VVCDFWLSSDITCCTASIMHLCVIAL. Cysteine 118 and cysteine 195 are oxidised to a cystine. 2 residues coordinate ergotamine: aspartate 125 and threonine 130. The short motif at 142–144 is the DRY motif; important for ligand-induced conformation changes and signaling element; sequence DRY. Topologically, residues 142 to 161 are cytoplasmic; it reads DRYWAITDAVEYSAKRTPRR. A helical membrane pass occupies residues 162 to 180; the sequence is AAVMIALVWVFSISISLPR. Over 181-201 the chain is Extracellular; sequence FFWRQAKAEEEVLDCLVNTDH. Valine 197 provides a ligand contact to ergotamine. Residues 202–225 form a helical membrane-spanning segment; that stretch reads VLYTVYSTVGAFYLPTLLLIALYG. Residues 226–311 lie on the Cytoplasmic side of the membrane; that stretch reads RIYVEARSRI…AARERKATKT (86 aa). The interval 253 to 272 is disordered; it reads ISDSPGSTSSVTSINSRVPD. The segment covering 254-268 has biased composition (low complexity); the sequence is SDSPGSTSSVTSINS. The helical transmembrane segment at 312–333 threads the bilayer; it reads LGIILGAFIVCWLPFFIISLVM. Over 334–343 the chain is Extracellular; the sequence is PICKDACWFH. Residues 344–366 traverse the membrane as a helical segment; it reads MAIFDFFNWLGYLNSLINPIIYT. Residues 361-365 carry the NPxxY motif; important for ligand-induced conformation changes and signaling motif; the sequence is NPIIY. The Cytoplasmic portion of the chain corresponds to 367 to 386; sequence MPNEDFKQAFHKLIRFKCTG. Cysteine 384 carries the S-palmitoyl cysteine lipid modification.

Belongs to the G-protein coupled receptor 1 family. In terms of assembly, homodimer. Heterodimer with HTR1D. In terms of processing, phosphorylated. Desensitization of the receptor may be mediated by its phosphorylation. Palmitoylated.

The protein resides in the cell membrane. Functionally, G-protein coupled receptor for 5-hydroxytryptamine (serotonin). Also functions as a receptor for ergot alkaloid derivatives, various anxiolytic and antidepressant drugs and other psychoactive substances, such as lysergic acid diethylamide (LSD). Ligand binding causes a conformation change that triggers signaling via guanine nucleotide-binding proteins (G proteins) and modulates the activity of downstream effectors, such as adenylate cyclase. HTR1B is coupled to G(i)/G(o) G alpha proteins and mediates inhibitory neurotransmission by inhibiting adenylate cyclase activity. Arrestin family members inhibit signaling via G proteins and mediate activation of alternative signaling pathways. Regulates the release of 5-hydroxytryptamine, dopamine and acetylcholine in the brain, and thereby affects neural activity, nociceptive processing, pain perception, mood and behavior. Besides, plays a role in vasoconstriction of cerebral arteries. The chain is 5-hydroxytryptamine receptor 1B (HTR1B) from Spalax ehrenbergi (Middle East blind mole rat).